Consider the following 337-residue polypeptide: Ketol-acid reductoisomerase (NADP(+)) (337 aa).

The 181-residue stretch at 3–183 (VEMFYDADAD…GGARAGVIKT (181 aa)) folds into the KARI N-terminal Rossmann domain. NADP(+) is bound by residues 26-29 (YGSQ), Lys49, Ser52, Ser54, and 84-87 (DTAQ). His109 is a catalytic residue. Gly135 provides a ligand contact to NADP(+). The region spanning 184–329 (TFKEETETDL…KKLRDLMSWV (146 aa)) is the KARI C-terminal knotted domain. Mg(2+) contacts are provided by Asp192, Glu196, Glu228, and Glu232. Ser253 is a binding site for substrate.

The protein belongs to the ketol-acid reductoisomerase family. It depends on Mg(2+) as a cofactor.

The enzyme catalyses (2R)-2,3-dihydroxy-3-methylbutanoate + NADP(+) = (2S)-2-acetolactate + NADPH + H(+). The catalysed reaction is (2R,3R)-2,3-dihydroxy-3-methylpentanoate + NADP(+) = (S)-2-ethyl-2-hydroxy-3-oxobutanoate + NADPH + H(+). It functions in the pathway amino-acid biosynthesis; L-isoleucine biosynthesis; L-isoleucine from 2-oxobutanoate: step 2/4. Its pathway is amino-acid biosynthesis; L-valine biosynthesis; L-valine from pyruvate: step 2/4. Involved in the biosynthesis of branched-chain amino acids (BCAA). Catalyzes an alkyl-migration followed by a ketol-acid reduction of (S)-2-acetolactate (S2AL) to yield (R)-2,3-dihydroxy-isovalerate. In the isomerase reaction, S2AL is rearranged via a Mg-dependent methyl migration to produce 3-hydroxy-3-methyl-2-ketobutyrate (HMKB). In the reductase reaction, this 2-ketoacid undergoes a metal-dependent reduction by NADPH to yield (R)-2,3-dihydroxy-isovalerate. This chain is Ketol-acid reductoisomerase (NADP(+)), found in Mycolicibacterium vanbaalenii (strain DSM 7251 / JCM 13017 / BCRC 16820 / KCTC 9966 / NRRL B-24157 / PYR-1) (Mycobacterium vanbaalenii).